The chain runs to 466 residues: Asparagine--tRNA ligase (466 aa).

This sequence belongs to the class-II aminoacyl-tRNA synthetase family. Homodimer.

The protein resides in the cytoplasm. The enzyme catalyses tRNA(Asn) + L-asparagine + ATP = L-asparaginyl-tRNA(Asn) + AMP + diphosphate + H(+). This chain is Asparagine--tRNA ligase, found in Wigglesworthia glossinidia brevipalpis.